Here is a 956-residue protein sequence, read N- to C-terminus: MILEERSSWEGSKRYCIKTKHVAIICAVVVAVGLIVGLSVGLTRSCDSTEGMTQGTTQGTTQAPSHLPPVTSPPEDQGVCPASEDESGGWKDFRLPDFIKPVHYDLEVKPLMEQDTYTGSVDISINVSSSTRYLWLHLRETRITRLPVLRRPSGEQVQVRQCFEYKKQEYVVVEAEEELEPNTGEGPYHLILEFAGWLNGSLVGFYRTTYVEKGQTKSIAATDHEPTDARKSFPCFDEPNKKATYTISIVHSKEYKALSNMPVEKEESVDDIWSRTTFQKSVPMSTYLVCFAVHQFDSVTRISNRGIPLTIYVQPEQKHTAEYAANITKSVFDYFEDYFGMSYSLPKLDKIAIPDFGTGAMENWGLITYRETNLLYDPDESASSNKQRVAAVIAHELVHQWFGNIVTMEWWDDLWLNEGFASFFEYLGVAYAEKDWQMRDQMILDDVLPVQEDDSLMSSHPIVVTVATPDEITSVFDGISYSKGASILRMLENWITREKFQIGCQNYLKKHKFENAKTSDFWAALEEASNLPVKEVMDTWTNQMGYPVLNVDNMKNITQKRFLLDPRANASEPHSAFGYTWNIPIKWTEDDEQRITLYNRSETGGITLESTLSGNAFLKINPDHIGFYRVNYEVSTWEWIATNLSVNHTDFSSADRASFIDDAFALARAQLLNYKEALNLTKYLKEEKEYLPWHRVISAVTYIISMFEDDKELYPVIEKYFRDQVKPIADSLGWNDVGDHLTKLLRASVLGLACKMGDSDALNNASQLFQEWLTGTVSLPVNLRLLVYRYGMQNSGNETSWNYTLEQYQKTSLAQEKEKLLYGLASVKNVTLLSRYLDLLKDSNLIKTQDVFTVIQYISYNSYGKTMAWNWIQLNWEYLVNRYTLNNRNLGRIVTIAEPFNTELQLWQIKSFFERYPEAGAGQKPREQVLETVKNNIEWLKQNRDTIRNWFLDLNG.

Over 1-21 (MILEERSSWEGSKRYCIKTKH) the chain is Cytoplasmic. A helical; Signal-anchor for type II membrane protein membrane pass occupies residues 22–42 (VAIICAVVVAVGLIVGLSVGL). Over 43 to 956 (TRSCDSTEGM…IRNWFLDLNG (914 aa)) the chain is Extracellular. Positions 48 to 87 (STEGMTQGTTQGTTQAPSHLPPVTSPPEDQGVCPASEDES) are disordered. Positions 49-62 (TEGMTQGTTQGTTQ) are enriched in low complexity. N-linked (GlcNAc...) asparagine glycosylation is found at Asn-126 and Asn-199. Residue Glu-225 coordinates substrate. A glycan (N-linked (GlcNAc...) asparagine) is linked at Asn-326. 359–363 (GAMEN) serves as a coordination point for substrate. A Zn(2+)-binding site is contributed by His-395. The active-site Proton acceptor is Glu-396. The Zn(2+) site is built by His-399 and Glu-418. Asn-556, Asn-569, Asn-599, Asn-643, Asn-647, Asn-679, Asn-764, Asn-797, Asn-802, and Asn-829 each carry an N-linked (GlcNAc...) asparagine glycan. Arg-888 is a substrate binding site.

This sequence belongs to the peptidase M1 family. Homodimer; disulfide-linked. It depends on Zn(2+) as a cofactor.

Its subcellular location is the cell membrane. The enzyme catalyses Release of N-terminal glutamate (and to a lesser extent aspartate) from a peptide.. Substrate specificity is modulated by calcium which enhances the enzymatic activity for cleavage of acidic residues while reducing its activity with basic residues. Inhibited by aminopeptidase inhibitors amastatin and bestatin. Regulates central hypertension through its calcium-modulated preference to cleave N-terminal acidic residues from peptides such as angiotensin II. The chain is Glutamyl aminopeptidase (ENPEP) from Bos taurus (Bovine).